The following is a 180-amino-acid chain: Cell division protein SepF (180 aa).

The disordered stretch occupies residues 1-66 (MAFSFKSFFG…NRNGFAYDNG (66 aa)). Residues 12-23 (ADDEEEEYEDSG) are compositionally biased toward acidic residues. The segment covering 24–57 (YEQQPNQGQQQPVNSQQQNTSNQSYSGYNNQNQN) has biased composition (low complexity).

It belongs to the SepF family. In terms of assembly, homodimer. Interacts with FtsZ.

It is found in the cytoplasm. Cell division protein that is part of the divisome complex and is recruited early to the Z-ring. Probably stimulates Z-ring formation, perhaps through the cross-linking of FtsZ protofilaments. Its function overlaps with FtsA. This chain is Cell division protein SepF, found in Oenococcus oeni (strain ATCC BAA-331 / PSU-1).